The sequence spans 641 residues: Chaperone protein DnaK (641 aa).

Thr-199 is modified (phosphothreonine; by autocatalysis). A disordered region spans residues 602 to 641 (MYADQADQAQQAGGQEEGQAKSADDAVDAEFEEVKDDDKK). Over residues 604-615 (ADQADQAQQAGG) the composition is skewed to low complexity. Over residues 626 to 641 (DAVDAEFEEVKDDDKK) the composition is skewed to acidic residues.

The protein belongs to the heat shock protein 70 family.

Functionally, acts as a chaperone. The sequence is that of Chaperone protein DnaK from Marinobacter nauticus (strain ATCC 700491 / DSM 11845 / VT8) (Marinobacter aquaeolei).